Reading from the N-terminus, the 197-residue chain is Holliday junction branch migration complex subunit RuvA (197 aa).

Residues 1–64 form a domain I region; the sequence is MIGRISGLLL…EDAHLLFGFA (64 aa). Residues 65–142 form a domain II region; that stretch reads TEGERQAFRQ…DLGVSAIPGA (78 aa). The segment at 143–153 is flexible linker; the sequence is AGARRPSTMGS. Positions 153-197 are domain III; that stretch reads SDVLNALLSLGYNDREANWAVSQLSVDLSVSDGIRQALKFLSKEK.

Belongs to the RuvA family. Homotetramer. Forms an RuvA(8)-RuvB(12)-Holliday junction (HJ) complex. HJ DNA is sandwiched between 2 RuvA tetramers; dsDNA enters through RuvA and exits via RuvB. An RuvB hexamer assembles on each DNA strand where it exits the tetramer. Each RuvB hexamer is contacted by two RuvA subunits (via domain III) on 2 adjacent RuvB subunits; this complex drives branch migration. In the full resolvosome a probable DNA-RuvA(4)-RuvB(12)-RuvC(2) complex forms which resolves the HJ.

It localises to the cytoplasm. Its function is as follows. The RuvA-RuvB-RuvC complex processes Holliday junction (HJ) DNA during genetic recombination and DNA repair, while the RuvA-RuvB complex plays an important role in the rescue of blocked DNA replication forks via replication fork reversal (RFR). RuvA specifically binds to HJ cruciform DNA, conferring on it an open structure. The RuvB hexamer acts as an ATP-dependent pump, pulling dsDNA into and through the RuvAB complex. HJ branch migration allows RuvC to scan DNA until it finds its consensus sequence, where it cleaves and resolves the cruciform DNA. This chain is Holliday junction branch migration complex subunit RuvA, found in Nitrosospira multiformis (strain ATCC 25196 / NCIMB 11849 / C 71).